The sequence spans 210 residues: Ribonuclease HII (210 aa).

The region spanning Asp17–Pro206 is the RNase H type-2 domain. A divalent metal cation-binding residues include Asp23, Glu24, and Asp115.

It belongs to the RNase HII family. Mn(2+) serves as cofactor. Mg(2+) is required as a cofactor.

The protein localises to the cytoplasm. The catalysed reaction is Endonucleolytic cleavage to 5'-phosphomonoester.. Its function is as follows. Endonuclease that specifically degrades the RNA of RNA-DNA hybrids. In Janthinobacterium sp. (strain Marseille) (Minibacterium massiliensis), this protein is Ribonuclease HII.